The following is a 282-amino-acid chain: Virginiamycin B lyase (282 aa).

His-217 provides a ligand contact to substrate. Glu-256 provides a ligand contact to Mg(2+). His-258 acts as the Proton acceptor in catalysis. Position 273 (Glu-273) interacts with Mg(2+).

The protein belongs to the Vgb family. As to quaternary structure, monomer. It depends on Mg(2+) as a cofactor.

Functionally, inactivates the type B streptogramin antibiotics by linearizing the lactone ring at the ester linkage, generating a free phenylglycine carboxylate and converting the threonyl moiety into 2-amino-butenoic acid. The chain is Virginiamycin B lyase from Mycolicibacterium smegmatis (strain ATCC 700084 / mc(2)155) (Mycobacterium smegmatis).